The chain runs to 158 residues: C-type lectin mannose-binding isoform (158 aa).

The N-terminal stretch at 1-20 (MGRFLLVTLSMLVVTFSLNE) is a signal peptide. 3 cysteine pairs are disulfide-bonded: C26–C37, C54–C154, and C129–C146. One can recognise a C-type lectin domain in the interval 33 to 155 (KNGFCYKVFN…CEALYHFICQ (123 aa)). The short motif at 119–121 (EPN) is the Mannose-binding element. N-linked (GlcNAc...) asparagine glycosylation is present at N121. Residues E127, N142, and D143 each coordinate Ca(2+).

It belongs to the true venom lectin family. Homodimer; disulfide-linked. Expressed by the venom gland.

It localises to the secreted. Mannose-binding lectin that binds to and agglutinates erythrocytes in a calcium-dependent manner. This chain is C-type lectin mannose-binding isoform, found in Notechis scutatus scutatus (Mainland tiger snake).